Consider the following 334-residue polypeptide: Chitinase 9 (334 aa).

The first 23 residues, 1 to 23, serve as a signal peptide directing secretion; the sequence is MKATTTAVALLVAAAAMAAQVVA. A Chitin-binding type-1 domain is found at 24–64; it reads EQCGSQAGGALCPNCLCCSSYGWCGSTSDYCGDGCQSQCDG. Cystine bridges form between Cys-26/Cys-41, Cys-35/Cys-47, Cys-38/Cys-65, Cys-40/Cys-54, Cys-58/Cys-62, Cys-107/Cys-169, Cys-181/Cys-189, and Cys-288/Cys-320. Glu-151 serves as the catalytic Proton donor.

This sequence belongs to the glycosyl hydrolase 19 family. Chitinase class I subfamily. As to expression, expressed at high levels in roots, sheaths and meristems.

It catalyses the reaction Random endo-hydrolysis of N-acetyl-beta-D-glucosaminide (1-&gt;4)-beta-linkages in chitin and chitodextrins.. May play a role in defense against fungal pathogens containing chitin. This is Chitinase 9 (Cht9) from Oryza sativa subsp. japonica (Rice).